Consider the following 290-residue polypeptide: MLAFTWIALRFIHFTSLMLVFGFAMYGAWLAPLTIRRLLAKRFLRLQQHAAVWSLISATAMLAVQGGLMGTGWTDVFSPNIWQAVLQTQFGGIWLWQIVLALVTLIVALMQPRNMPRLLFMLTTAQFILLAGVGHATLNEGVTAKIHQTNHAIHLICAAAWFGGLLPVLWCMQLIKGRWRHQAIQALMRFSWCGHFAVIGVLASGVLNALLITGFPPTLTTYWGQLLLLKAILVMIMVVIALANRYVLVPRMRQDEDRAAPWFVWMTKLEWAIGAVVLVIISLLATLEPF.

Residues 1–10 lie on the Periplasmic side of the membrane; that stretch reads MLAFTWIALR. The chain crosses the membrane as a helical span at residues 11–31; the sequence is FIHFTSLMLVFGFAMYGAWLA. Residues 32 to 49 lie on the Cytoplasmic side of the membrane; it reads PLTIRRLLAKRFLRLQQH. The chain crosses the membrane as a helical span at residues 50-70; the sequence is AAVWSLISATAMLAVQGGLMG. Residues 71-89 are Periplasmic-facing; the sequence is TGWTDVFSPNIWQAVLQTQ. Residues 90–110 form a helical membrane-spanning segment; sequence FGGIWLWQIVLALVTLIVALM. Residues 111–117 are Cytoplasmic-facing; that stretch reads QPRNMPR. The chain crosses the membrane as a helical span at residues 118 to 138; it reads LLFMLTTAQFILLAGVGHATL. The Periplasmic segment spans residues 139–151; it reads NEGVTAKIHQTNH. The helical transmembrane segment at 152–172 threads the bilayer; the sequence is AIHLICAAAWFGGLLPVLWCM. The Cytoplasmic portion of the chain corresponds to 173–195; that stretch reads QLIKGRWRHQAIQALMRFSWCGH. The chain crosses the membrane as a helical span at residues 196 to 216; sequence FAVIGVLASGVLNALLITGFP. At 217–222 the chain is on the periplasmic side; sequence PTLTTY. The helical transmembrane segment at 223 to 243 threads the bilayer; it reads WGQLLLLKAILVMIMVVIALA. At 244 to 260 the chain is on the cytoplasmic side; sequence NRYVLVPRMRQDEDRAA. A helical membrane pass occupies residues 261–281; sequence PWFVWMTKLEWAIGAVVLVII. Topologically, residues 282–290 are periplasmic; that stretch reads SLLATLEPF.

The protein belongs to the CopD family.

It is found in the cell inner membrane. This chain is Inner membrane protein YebZ (yebZ), found in Escherichia coli (strain K12).